Consider the following 270-residue polypeptide: Non-structural maintenance of chromosomes element 1 homolog (270 aa).

The RING-type; atypical zinc finger occupies 185 to 226; that stretch reads CNVCRKVAIQSQLCENCGIPLHLQCAGKYFHGKANPTCPNCN. The disordered stretch occupies residues 236 to 270; it reads LNQVSSQGPSHSQTETVRGRNQRSKNTSTASRTSR. Polar residues-rich tracts occupy residues 237 to 251 and 259 to 270; these read NQVSSQGPSHSQTET and SKNTSTASRTSR.

It belongs to the NSE1 family. As to quaternary structure, component of the SMC5-SMC6 complex.

It is found in the nucleus. The protein localises to the chromosome. It localises to the telomere. It catalyses the reaction S-ubiquitinyl-[E2 ubiquitin-conjugating enzyme]-L-cysteine + [acceptor protein]-L-lysine = [E2 ubiquitin-conjugating enzyme]-L-cysteine + N(6)-ubiquitinyl-[acceptor protein]-L-lysine.. Its function is as follows. RING-type zinc finger-containing E3 ubiquitin ligase that assembles with melanoma antigen protein (MAGE) to catalyze the direct transfer of ubiquitin from E2 ubiquitin-conjugating enzyme to a specific substrate. Within MAGE-RING ubiquitin ligase complex, MAGE stimulates and specifies ubiquitin ligase activity likely through recruitment and/or stabilization of the E2 ubiquitin-conjugating enzyme at the E3:substrate complex. Involved in maintenance of genome integrity, DNA damage response and DNA repair. In Xenopus laevis (African clawed frog), this protein is Non-structural maintenance of chromosomes element 1 homolog (nsmce1).